The following is a 255-amino-acid chain: Type III pantothenate kinase (255 aa).

7–14 (DVGNTRLK) is an ATP binding site. Substrate is bound by residues Y96 and 103-106 (GADR). The active-site Proton acceptor is the D105. T133 contributes to the ATP binding site. T183 contacts substrate.

Belongs to the type III pantothenate kinase family. Homodimer. NH4(+) serves as cofactor. Requires K(+) as cofactor.

The protein localises to the cytoplasm. The catalysed reaction is (R)-pantothenate + ATP = (R)-4'-phosphopantothenate + ADP + H(+). It functions in the pathway cofactor biosynthesis; coenzyme A biosynthesis; CoA from (R)-pantothenate: step 1/5. Functionally, catalyzes the phosphorylation of pantothenate (Pan), the first step in CoA biosynthesis. The sequence is that of Type III pantothenate kinase from Albidiferax ferrireducens (strain ATCC BAA-621 / DSM 15236 / T118) (Rhodoferax ferrireducens).